The sequence spans 95 residues: Putative membrane protein insertion efficiency factor (95 aa).

Belongs to the UPF0161 family.

The protein resides in the cell membrane. Functionally, could be involved in insertion of integral membrane proteins into the membrane. This Lactobacillus delbrueckii subsp. bulgaricus (strain ATCC 11842 / DSM 20081 / BCRC 10696 / JCM 1002 / NBRC 13953 / NCIMB 11778 / NCTC 12712 / WDCM 00102 / Lb 14) protein is Putative membrane protein insertion efficiency factor.